Consider the following 57-residue polypeptide: Large ribosomal subunit protein bL32c (57 aa).

Belongs to the bacterial ribosomal protein bL32 family.

It localises to the plastid. It is found in the chloroplast. The chain is Large ribosomal subunit protein bL32c from Vitis vinifera (Grape).